We begin with the raw amino-acid sequence, 384 residues long: 8-amino-7-oxononanoate synthase (384 aa).

Residue Arg21 participates in substrate binding. Pyridoxal 5'-phosphate is bound at residue 108-109 (GF). His133 lines the substrate pocket. 3 residues coordinate pyridoxal 5'-phosphate: Ser179, His207, and Thr233. At Lys236 the chain carries N6-(pyridoxal phosphate)lysine. A substrate-binding site is contributed by Thr352.

The protein belongs to the class-II pyridoxal-phosphate-dependent aminotransferase family. BioF subfamily. Homodimer. It depends on pyridoxal 5'-phosphate as a cofactor.

It carries out the reaction 6-carboxyhexanoyl-[ACP] + L-alanine + H(+) = (8S)-8-amino-7-oxononanoate + holo-[ACP] + CO2. Its pathway is cofactor biosynthesis; biotin biosynthesis. Catalyzes the decarboxylative condensation of pimeloyl-[acyl-carrier protein] and L-alanine to produce 8-amino-7-oxononanoate (AON), [acyl-carrier protein], and carbon dioxide. In Shigella sonnei (strain Ss046), this protein is 8-amino-7-oxononanoate synthase.